Reading from the N-terminus, the 396-residue chain is Probable 20S rRNA accumulation protein 4 (396 aa).

The protein belongs to the TSR4 family.

It is found in the cytoplasm. It localises to the nucleus. The protein resides in the nucleolus. In terms of biological role, required for processing of the 20S pre-rRNA at site D to generate mature 18S rRNA. In Schizosaccharomyces pombe (strain 972 / ATCC 24843) (Fission yeast), this protein is Probable 20S rRNA accumulation protein 4.